Consider the following 34-residue polypeptide: Delta-conotoxin AtVIA (34 aa).

Positions 1–4 are excised as a propeptide; it reads LSKK. Gln5 carries the pyrrolidone carboxylic acid modification. Disulfide bonds link Cys6/Cys23, Cys13/Cys27, and Cys22/Cys31.

As to expression, expressed by the venom duct.

The protein localises to the secreted. Functionally, probable toxin from a worm-hunter cone snail. Shows an excitatory activity on a majority of mouse lumbar dorsal root ganglion (DRG) neurons. Very probably inhibits the inactivation of voltage-gated sodium channels (Nav). In Conus ateralbus (Cone snail), this protein is Delta-conotoxin AtVIA.